We begin with the raw amino-acid sequence, 395 residues long: Putative gustatory receptor 93b (395 aa).

The Cytoplasmic portion of the chain corresponds to 1-18 (MSGLLVMPRILRCLNVSR). Residues 19–39 (ISAILLRSCFLYGTFFGVITF) form a helical membrane-spanning segment. The Extracellular portion of the chain corresponds to 40 to 89 (RIERKDSQLVAINRRGYLWICLVIRLLASCFYGYSYDAWSGQYEDMYLRA). The chain crosses the membrane as a helical span at residues 90 to 110 (FFGFRLIGCLICSVIILVMQF). Residues 111-153 (WFGEELINLVNRFLQLFRRMQSLTNSPKNRFGDRAEFLLMFSK) are Cytoplasmic-facing. The helical transmembrane segment at 154-174 (VFSLLFVFMAFRLMLSPWFLL) threads the bilayer. At 175-183 (TLVCDLYTS) the chain is on the extracellular side. A helical membrane pass occupies residues 184–204 (VGTGMITHLCFVGYLSIGVLY). Residues 205–267 (RDLNNYVDCQ…RSFQQLFDLP (63 aa)) lie on the Cytoplasmic side of the membrane. The helical transmembrane segment at 268-288 (LFLSLAQSLLAMSMVSYHAIL) threads the bilayer. Residues 289 to 293 (RRQYS) lie on the Extracellular side of the membrane. Residues 294–314 (FNLWGLVIKLLIDVVLLTMSV) traverse the membrane as a helical segment. The Cytoplasmic portion of the chain corresponds to 315-369 (HSAVNGSRLIRRLSFENFYVTDSQSYHQKLELFLGRLQHQELRVFPLGLFEVSNE). A helical membrane pass occupies residues 370 to 390 (LTLFFLSAMVTYLVFLVQYGM). The Extracellular portion of the chain corresponds to 391 to 395 (QSQQI).

This sequence belongs to the insect chemoreceptor superfamily. Gustatory receptor (GR) family. Gr93a subfamily. In larvae, is expressed in neurons of the terminal external chemosensory organ and of the dorsal pharyngeal sense organ.

It localises to the cell membrane. Probable gustatory receptor which mediates acceptance or avoidance behavior, depending on its substrates. This is Putative gustatory receptor 93b (Gr93b) from Drosophila melanogaster (Fruit fly).